The sequence spans 227 residues: Cytochrome c oxidase subunit 2 (227 aa).

Residues 1 to 14 lie on the Mitochondrial intermembrane side of the membrane; the sequence is MAHAAQMGLQDATS. The chain crosses the membrane as a helical span at residues 15 to 45; it reads PIMEELISFHDHALMIIFLISFLVLYALFLT. Over 46–59 the chain is Mitochondrial matrix; that stretch reads LTTKLTNTNITDAQ. The chain crosses the membrane as a helical span at residues 60–87; it reads EMETVWTILPAIILVLIALPSLRILYLT. Over 88 to 227 the chain is Mitochondrial intermembrane; sequence DEINDPSFTI…IFEMGPVFTL (140 aa). Residues histidine 161, cysteine 196, glutamate 198, cysteine 200, histidine 204, and methionine 207 each coordinate Cu cation. Position 198 (glutamate 198) interacts with Mg(2+).

This sequence belongs to the cytochrome c oxidase subunit 2 family. As to quaternary structure, component of the cytochrome c oxidase (complex IV, CIV), a multisubunit enzyme composed of 14 subunits. The complex is composed of a catalytic core of 3 subunits MT-CO1, MT-CO2 and MT-CO3, encoded in the mitochondrial DNA, and 11 supernumerary subunits COX4I, COX5A, COX5B, COX6A, COX6B, COX6C, COX7A, COX7B, COX7C, COX8 and NDUFA4, which are encoded in the nuclear genome. The complex exists as a monomer or a dimer and forms supercomplexes (SCs) in the inner mitochondrial membrane with NADH-ubiquinone oxidoreductase (complex I, CI) and ubiquinol-cytochrome c oxidoreductase (cytochrome b-c1 complex, complex III, CIII), resulting in different assemblies (supercomplex SCI(1)III(2)IV(1) and megacomplex MCI(2)III(2)IV(2)). Found in a complex with TMEM177, COA6, COX18, COX20, SCO1 and SCO2. Interacts with TMEM177 in a COX20-dependent manner. Interacts with COX20. Interacts with COX16. Requires Cu cation as cofactor.

Its subcellular location is the mitochondrion inner membrane. It catalyses the reaction 4 Fe(II)-[cytochrome c] + O2 + 8 H(+)(in) = 4 Fe(III)-[cytochrome c] + 2 H2O + 4 H(+)(out). Its function is as follows. Component of the cytochrome c oxidase, the last enzyme in the mitochondrial electron transport chain which drives oxidative phosphorylation. The respiratory chain contains 3 multisubunit complexes succinate dehydrogenase (complex II, CII), ubiquinol-cytochrome c oxidoreductase (cytochrome b-c1 complex, complex III, CIII) and cytochrome c oxidase (complex IV, CIV), that cooperate to transfer electrons derived from NADH and succinate to molecular oxygen, creating an electrochemical gradient over the inner membrane that drives transmembrane transport and the ATP synthase. Cytochrome c oxidase is the component of the respiratory chain that catalyzes the reduction of oxygen to water. Electrons originating from reduced cytochrome c in the intermembrane space (IMS) are transferred via the dinuclear copper A center (CU(A)) of subunit 2 and heme A of subunit 1 to the active site in subunit 1, a binuclear center (BNC) formed by heme A3 and copper B (CU(B)). The BNC reduces molecular oxygen to 2 water molecules using 4 electrons from cytochrome c in the IMS and 4 protons from the mitochondrial matrix. This Symphalangus syndactylus (Siamang) protein is Cytochrome c oxidase subunit 2 (MT-CO2).